A 176-amino-acid chain; its full sequence is MAWMLLLILIMVYPGSCALWVSQPPEIRTLEGSSAFLPCSFNASQGRLAIGSVTWFRDEVAPGKEVRNGTPEFRGRLAPLSSSRFLRDHQAELHIWDVRGHDAGIYVCRVEVLGLGVGTGNGTRLVVEKEYPQLGAGTVLLLRAGFYAVSFLSVAVGSTLYYQGKCHCHMGTHCHS.

The first 18 residues, 1–18, serve as a signal peptide directing secretion; that stretch reads MAWMLLLILIMVYPGSCA. The Ig-like domain occupies 19–126; that stretch reads LWVSQPPEIR…VGTGNGTRLV (108 aa). Topologically, residues 19 to 135 are extracellular; that stretch reads LWVSQPPEIR…VVEKEYPQLG (117 aa). A disulfide bridge links C39 with C108. Residues N42 and N121 are each glycosylated (N-linked (GlcNAc...) asparagine). A helical membrane pass occupies residues 136–156; that stretch reads AGTVLLLRAGFYAVSFLSVAV. Residues 157–176 are Cytoplasmic-facing; the sequence is GSTLYYQGKCHCHMGTHCHS.

The protein belongs to the natural cytotoxicity receptor (NCR) family. In terms of assembly, homodimer in the unliganted form. Interacts with CD3Z. Interacts with and is activated by binding to NCR3LG1. Interacts with and is activated by binding to BAG6. Interacts with and is inhibited by binding to LGALS3.

The protein localises to the cell membrane. Functionally, cell membrane receptor of natural killer/NK cells that is activated by binding of extracellular ligands including BAG6 and NCR3LG1. Stimulates NK cells cytotoxicity toward neighboring cells producing these ligands. It controls, for instance, NK cells cytotoxicity against tumor cells. Engagement of NCR3 by BAG6 also promotes myeloid dendritic cells (DC) maturation, both through killing DCs that did not acquire a mature phenotype, and inducing the release by NK cells of TNFA and IFNG that promote DC maturation. This is Natural cytotoxicity triggering receptor 3 (NCR3) from Macaca fascicularis (Crab-eating macaque).